Here is a 294-residue protein sequence, read N- to C-terminus: MEIRRRPPNPKVRVAHLEYAVPHDEEEPKNILEKIVWAKDREVDAARERVPLQTLKRQIEDLPPTRDFLAALREAPVQPAVIAEVKKASPSKGVIREDFDPVAIAEAYAAGGARCLSVLTDKTFFQGGFDVLVEVRQAVDLPLLCKEFVLSPYQLFQARAAGADAVLLIAAILTDQDLQYLKKAAAALGLDVLVEVHDAAELERVLNLGGFPLIGINNRDLTSFETDLSTTEQLMERFGDRLQDQGSLLVSESGLFDRSDLDRVKAAGADAVLVGEALMRQQDVQSALTNLIHG.

It belongs to the TrpC family.

It catalyses the reaction 1-(2-carboxyphenylamino)-1-deoxy-D-ribulose 5-phosphate + H(+) = (1S,2R)-1-C-(indol-3-yl)glycerol 3-phosphate + CO2 + H2O. The protein operates within amino-acid biosynthesis; L-tryptophan biosynthesis; L-tryptophan from chorismate: step 4/5. The sequence is that of Indole-3-glycerol phosphate synthase from Parasynechococcus marenigrum (strain WH8102).